A 517-amino-acid polypeptide reads, in one-letter code: T-box transcription factor TBX5 (517 aa).

The segment at methionine 1 to phenylalanine 46 is disordered. Over residues leucine 15–proline 28 the composition is skewed to basic and acidic residues. Positions alanine 34 to alanine 45 are enriched in low complexity. The T-box DNA-binding region spans leucine 58–glycine 238. 2 disordered regions span residues histidine 270–alanine 313 and serine 331–threonine 369. The segment covering serine 271–serine 300 has biased composition (polar residues). Position 338 is an N6-acetyllysine (lysine 338). Residues tyrosine 357–threonine 369 are compositionally biased toward polar residues.

In terms of assembly, monomer. Homodimer (via the T-box); binds DNA as homodimer. Interacts (via the T-box) with NKX2-5 (via the homeobox); this complex binds DNA. Interacts with GATA4. Interacts with KAT2A and KAT2B. Acetylation at Lys-338 by KAT2A and KAT2B promotes nuclear retention.

The protein localises to the nucleus. It localises to the cytoplasm. DNA-binding protein that regulates the transcription of several genes and is involved in heart development and limb pattern formation. Binds to the core DNA motif of NPPA promoter. This chain is T-box transcription factor TBX5 (Tbx5), found in Rattus norvegicus (Rat).